Here is a 156-residue protein sequence, read N- to C-terminus: Small ribosomal subunit protein uS7 (156 aa).

This sequence belongs to the universal ribosomal protein uS7 family. Part of the 30S ribosomal subunit. Contacts proteins S9 and S11.

One of the primary rRNA binding proteins, it binds directly to 16S rRNA where it nucleates assembly of the head domain of the 30S subunit. Is located at the subunit interface close to the decoding center, probably blocks exit of the E-site tRNA. This is Small ribosomal subunit protein uS7 from Shewanella sediminis (strain HAW-EB3).